A 215-amino-acid polypeptide reads, in one-letter code: Eukaryotic translation initiation factor 4E (215 aa).

The disordered stretch occupies residues methionine 1–proline 27. Phosphoserine; by PKC is present on serine 207.

This sequence belongs to the eukaryotic initiation factor 4E family. EIF4F is a multi-subunit complex, the composition of which varies with external and internal environmental conditions. It is composed of at least eIF4A, eIF4E and eIF4G. eIF4E is also known to interact with other partners. Post-translationally, phosphorylation increases the ability of the protein to bind to mRNA caps and to form the eIF4F complex.

Its function is as follows. Recognizes and binds the 7-methylguanosine-containing mRNA cap during an early step in the initiation of protein synthesis and facilitates ribosome binding by inducing the unwinding of the mRNAs secondary structures. The protein is Eukaryotic translation initiation factor 4E of Aplysia californica (California sea hare).